The chain runs to 293 residues: Protein BOBBER 2 (293 aa).

The residue at position 2 (alanine 2) is an N-acetylalanine. A coiled-coil region spans residues glutamate 50–methionine 80. Composition is skewed to basic and acidic residues over residues alanine 67–serine 102 and glutamate 110–serine 120. The interval alanine 67–proline 125 is disordered. A CS domain is found at leucine 131 to valine 220.

The protein localises to the cytoplasm. The protein resides in the cytoplasmic granule. Small heat shock protein required for the establishment of auxin gradients and for patterning of the apical domain of the embryo. Involved in the specification of the cotyledon primordia. Also required for normal inflorescence and floral meristem function, normal developmental patterning and thermotolerance. Acts as a molecular chaperone. The chain is Protein BOBBER 2 (BOB2) from Arabidopsis thaliana (Mouse-ear cress).